The following is a 296-amino-acid chain: Probable transcription factor At1g44810 (296 aa).

Residues 1-119 form a disordered region; it reads MNKKLLNPLE…AKKVSGDDDN (119 aa). Residues 19-28 are compositionally biased toward acidic residues; the sequence is EDVDEEISSG. Over residues 52-72 the composition is skewed to polar residues; the sequence is TQTLNSPSTEAPTLDSGSETN. Residues 97–119 are compositionally biased toward basic and acidic residues; the sequence is RASEGTSSKDIKRAKKVSGDDDN.

This sequence belongs to the GeBP family.

The polypeptide is Probable transcription factor At1g44810 (Arabidopsis thaliana (Mouse-ear cress)).